The chain runs to 745 residues: Putative cryptochrome DASH, mitochondrial (745 aa).

The N-terminal 22 residues, 1 to 22 (MAPSKVVIYAMRRELRLSDNPI), are a transit peptide targeting the mitochondrion. Residues 23 to 166 (FHHLSNPESK…DFKLWDDEKY (144 aa)) form the Photolyase/cryptochrome alpha/beta domain. Disordered regions lie at residues 563–688 (KFNL…GGGG) and 702–745 (GGYR…QTDA). Residues 571 to 584 (SKVKKRPFFRKRGT) are compositionally biased toward basic residues. Over residues 591–603 (GSAESPGSSDSHS) the composition is skewed to low complexity. A compositionally biased stretch (gly residues) spans 604–616 (GSGGSPDGSGGGN). The segment covering 632 to 648 (QQTHQGSGRSQSSSNHG) has biased composition (low complexity). 2 stretches are compositionally biased toward gly residues: residues 672–688 (RGGG…GGGG) and 702–718 (GGYR…GGFR). The segment covering 735–745 (QQVASQFQTDA) has biased composition (polar residues).

It belongs to the DNA photolyase class-1 family. Requires FAD as cofactor. The cofactor is (6R)-5,10-methylene-5,6,7,8-tetrahydrofolate.

The protein localises to the mitochondrion. Functionally, may have a photoreceptor function. The chain is Putative cryptochrome DASH, mitochondrial (cry) from Neurospora crassa (strain ATCC 24698 / 74-OR23-1A / CBS 708.71 / DSM 1257 / FGSC 987).